The sequence spans 594 residues: Elongation factor 4 (594 aa).

The tr-type G domain occupies 2–184 (KNIRNFSIIA…TIVAKVPAPE (183 aa)). Residues 14 to 19 (DHGKST) and 131 to 134 (NKID) contribute to the GTP site.

This sequence belongs to the TRAFAC class translation factor GTPase superfamily. Classic translation factor GTPase family. LepA subfamily.

Its subcellular location is the cell inner membrane. The catalysed reaction is GTP + H2O = GDP + phosphate + H(+). Required for accurate and efficient protein synthesis under certain stress conditions. May act as a fidelity factor of the translation reaction, by catalyzing a one-codon backward translocation of tRNAs on improperly translocated ribosomes. Back-translocation proceeds from a post-translocation (POST) complex to a pre-translocation (PRE) complex, thus giving elongation factor G a second chance to translocate the tRNAs correctly. Binds to ribosomes in a GTP-dependent manner. This Francisella philomiragia subsp. philomiragia (strain ATCC 25017 / CCUG 19701 / FSC 153 / O#319-036) protein is Elongation factor 4.